A 125-amino-acid polypeptide reads, in one-letter code: Small ribosomal subunit protein eS8 (125 aa).

A disordered region spans residues 1-30; that stretch reads MTIFQGRATRKPSGGKLRPNHSKRRYELGR.

This sequence belongs to the eukaryotic ribosomal protein eS8 family. As to quaternary structure, part of the 30S ribosomal subunit.

The sequence is that of Small ribosomal subunit protein eS8 from Picrophilus torridus (strain ATCC 700027 / DSM 9790 / JCM 10055 / NBRC 100828 / KAW 2/3).